We begin with the raw amino-acid sequence, 118 residues long: MKLRANRVGEQMKKELGDIISRKIKDPRVGFVTVTDVQVSGDLQIATVYISVLGDEEQKENTLKGLAKAKGFIRSEIGQRIRLRKTPEISFEFDESIGYGHRIDTLLHQINKDGKREE.

This sequence belongs to the RbfA family. Monomer. Binds 30S ribosomal subunits, but not 50S ribosomal subunits or 70S ribosomes.

The protein resides in the cytoplasm. In terms of biological role, one of several proteins that assist in the late maturation steps of the functional core of the 30S ribosomal subunit. Associates with free 30S ribosomal subunits (but not with 30S subunits that are part of 70S ribosomes or polysomes). Required for efficient processing of 16S rRNA. May interact with the 5'-terminal helix region of 16S rRNA. In Bacillus thuringiensis (strain Al Hakam), this protein is Ribosome-binding factor A.